The sequence spans 350 residues: Ketol-acid reductoisomerase (NADP(+)) (350 aa).

Residues 3 to 183 (AQIWYEDDGD…GALRAGAIKT (181 aa)) form the KARI N-terminal Rossmann domain. Residues 26–29 (YGSQ), R49, S52, S54, and 84–87 (DQYQ) each bind NADP(+). The active site involves H109. Residue G135 coordinates NADP(+). In terms of domain architecture, KARI C-terminal knotted spans 184 to 327 (TFKEETETDL…PKLRAMFSWN (144 aa)). Residues D192, E196, E228, and E232 each contribute to the Mg(2+) site. A substrate-binding site is contributed by S253.

It belongs to the ketol-acid reductoisomerase family. Mg(2+) is required as a cofactor.

It catalyses the reaction (2R)-2,3-dihydroxy-3-methylbutanoate + NADP(+) = (2S)-2-acetolactate + NADPH + H(+). It carries out the reaction (2R,3R)-2,3-dihydroxy-3-methylpentanoate + NADP(+) = (S)-2-ethyl-2-hydroxy-3-oxobutanoate + NADPH + H(+). It participates in amino-acid biosynthesis; L-isoleucine biosynthesis; L-isoleucine from 2-oxobutanoate: step 2/4. Its pathway is amino-acid biosynthesis; L-valine biosynthesis; L-valine from pyruvate: step 2/4. Its function is as follows. Involved in the biosynthesis of branched-chain amino acids (BCAA). Catalyzes an alkyl-migration followed by a ketol-acid reduction of (S)-2-acetolactate (S2AL) to yield (R)-2,3-dihydroxy-isovalerate. In the isomerase reaction, S2AL is rearranged via a Mg-dependent methyl migration to produce 3-hydroxy-3-methyl-2-ketobutyrate (HMKB). In the reductase reaction, this 2-ketoacid undergoes a metal-dependent reduction by NADPH to yield (R)-2,3-dihydroxy-isovalerate. This is Ketol-acid reductoisomerase (NADP(+)) from Bifidobacterium animalis subsp. lactis (strain AD011).